Consider the following 207-residue polypeptide: Uracil phosphoribosyltransferase (207 aa).

5-phospho-alpha-D-ribose 1-diphosphate is bound by residues Arg77, Arg102, and 129 to 137 (DPMLATGGS). Uracil-binding positions include Ile192 and 197 to 199 (GDA). Asp198 is a binding site for 5-phospho-alpha-D-ribose 1-diphosphate.

It belongs to the UPRTase family. Requires Mg(2+) as cofactor.

It carries out the reaction UMP + diphosphate = 5-phospho-alpha-D-ribose 1-diphosphate + uracil. The protein operates within pyrimidine metabolism; UMP biosynthesis via salvage pathway; UMP from uracil: step 1/1. With respect to regulation, allosterically activated by GTP. In terms of biological role, catalyzes the conversion of uracil and 5-phospho-alpha-D-ribose 1-diphosphate (PRPP) to UMP and diphosphate. This chain is Uracil phosphoribosyltransferase, found in Dictyoglomus thermophilum (strain ATCC 35947 / DSM 3960 / H-6-12).